A 266-amino-acid chain; its full sequence is Interleukin-1 beta (266 aa).

A propeptide spanning residues 1–113 (MATVPEPINE…ETSSDEFLCD (113 aa)) is cleaved from the precursor.

The protein belongs to the IL-1 family. Monomer. In its precursor form, weakly interacts with full-length MEFV; the mature cytokine does not interact at all. Interacts with integrins ITGAV:ITGBV and ITGA5:ITGB1; integrin-binding is required for IL1B signaling. Interacts with cargo receptor TMED10; the interaction is direct and is required for the secretion of IL1B mature form. Interacts with HSP90AB1; the interaction facilitates cargo translocation into the ERGIC. Interacts with HSP90B1; the interaction facilitates cargo translocation into the ERGIC.

The protein resides in the cytoplasm. It localises to the cytosol. Its subcellular location is the secreted. It is found in the lysosome. The protein localises to the extracellular exosome. Its function is as follows. Potent pro-inflammatory cytokine. Initially discovered as the major endogenous pyrogen, induces prostaglandin synthesis, neutrophil influx and activation, T-cell activation and cytokine production, B-cell activation and antibody production, and fibroblast proliferation and collagen production. Promotes Th17 differentiation of T-cells. Synergizes with IL12/interleukin-12 to induce IFNG synthesis from T-helper 1 (Th1) cells. Plays a role in angiogenesis by inducing VEGF production synergistically with TNF and IL6. Involved in transduction of inflammation downstream of pyroptosis: its mature form is specifically released in the extracellular milieu by passing through the gasdermin-D (GSDMD) pore. The protein is Interleukin-1 beta (IL1B) of Bubalus carabanensis (Swamp type water buffalo).